The chain runs to 323 residues: tRNA U34 carboxymethyltransferase (323 aa).

Residues Lys-91, Trp-105, Lys-110, Gly-130, 152 to 154, 181 to 182, Met-196, Tyr-200, and Arg-315 each bind carboxy-S-adenosyl-L-methionine; these read DPT and IE.

This sequence belongs to the class I-like SAM-binding methyltransferase superfamily. CmoB family. Homotetramer.

The catalysed reaction is carboxy-S-adenosyl-L-methionine + 5-hydroxyuridine(34) in tRNA = 5-carboxymethoxyuridine(34) in tRNA + S-adenosyl-L-homocysteine + H(+). In terms of biological role, catalyzes carboxymethyl transfer from carboxy-S-adenosyl-L-methionine (Cx-SAM) to 5-hydroxyuridine (ho5U) to form 5-carboxymethoxyuridine (cmo5U) at position 34 in tRNAs. In Escherichia coli (strain SE11), this protein is tRNA U34 carboxymethyltransferase.